A 272-amino-acid polypeptide reads, in one-letter code: HMP-PP phosphatase (272 aa).

Aspartate 8 functions as the Nucleophile in the catalytic mechanism. The Mg(2+) site is built by aspartate 8, aspartate 10, and aspartate 212.

It belongs to the HAD-like hydrolase superfamily. Cof family. It depends on Mg(2+) as a cofactor.

The catalysed reaction is 4-amino-2-methyl-5-(diphosphooxymethyl)pyrimidine + H2O = 4-amino-2-methyl-5-(phosphooxymethyl)pyrimidine + phosphate + H(+). Its function is as follows. Catalyzes the hydrolysis of 4-amino-2-methyl-5-hydroxymethylpyrimidine pyrophosphate (HMP-PP) to 4-amino-2-methyl-5-hydroxymethylpyrimidine phosphate (HMP-P). This Salmonella enteritidis PT4 (strain P125109) protein is HMP-PP phosphatase.